The following is a 286-amino-acid chain: Tryptophan 2,3-dioxygenase (286 aa).

Residues 53 to 57 (FIVQH), Y115, and R119 contribute to the substrate site. H242 lines the heme pocket. Residue T256 participates in substrate binding.

It belongs to the tryptophan 2,3-dioxygenase family. In terms of assembly, homotetramer. Heme serves as cofactor.

It catalyses the reaction L-tryptophan + O2 = N-formyl-L-kynurenine. The protein operates within amino-acid degradation; L-tryptophan degradation via kynurenine pathway; L-kynurenine from L-tryptophan: step 1/2. Heme-dependent dioxygenase that catalyzes the oxidative cleavage of the L-tryptophan (L-Trp) pyrrole ring and converts L-tryptophan to N-formyl-L-kynurenine. Catalyzes the oxidative cleavage of the indole moiety. In Kineococcus radiotolerans (strain ATCC BAA-149 / DSM 14245 / SRS30216), this protein is Tryptophan 2,3-dioxygenase.